The following is a 414-amino-acid chain: Snake venom metalloproteinase (414 aa).

Residues 1–20 (MIEVLLVTICLAVFPYQGSS) form the signal peptide. The propeptide occupies 21 to 190 (IILESGNVND…KASDLNFNSD (170 aa)). A Pyrrolidone carboxylic acid modification is found at glutamine 191. One can recognise a Peptidase M12B domain in the interval 197-393 (RYVELVIVAD…YKPQCILNKP (197 aa)). Residues glutamate 200 and aspartate 284 each contribute to the Ca(2+) site. Intrachain disulfides connect cysteine 308/cysteine 388 and cysteine 348/cysteine 355. Histidine 333 contributes to the Zn(2+) binding site. Residue glutamate 334 is part of the active site. The Zn(2+) site is built by histidine 337 and histidine 343. Ca(2+) contacts are provided by cysteine 388 and asparagine 391. Residues 394 to 414 (LRIDPVSTPVSGNELLEAGEE) constitute a propeptide that is removed on maturation.

Belongs to the venom metalloproteinase (M12B) family. P-I subfamily. Monomer. Requires Zn(2+) as cofactor. As to expression, expressed by the venom gland.

It is found in the secreted. In terms of biological role, snake venom metalloproteinase that impairs hemostasis in the envenomed animal. This chain is Snake venom metalloproteinase, found in Crotalus molossus molossus (Northern black-tailed rattlesnake).